The following is a 375-amino-acid chain: Pectate lyase B (375 aa).

An N-terminal signal peptide occupies residues 1–22 (MKSLITPIAAGLLLAFSQYSLA). Cysteines 93 and 176 form a disulfide. Asp-150, Asp-152, Glu-187, and Asp-191 together coordinate Ca(2+). Arg-240 is a catalytic residue. Cys-351 and Cys-374 form a disulfide bridge.

It belongs to the polysaccharide lyase 1 family. PLADES subfamily. The cofactor is Ca(2+).

The protein resides in the secreted. It carries out the reaction Eliminative cleavage of (1-&gt;4)-alpha-D-galacturonan to give oligosaccharides with 4-deoxy-alpha-D-galact-4-enuronosyl groups at their non-reducing ends.. The protein operates within glycan metabolism; pectin degradation; 2-dehydro-3-deoxy-D-gluconate from pectin: step 2/5. Its function is as follows. Involved in maceration and soft-rotting of plant tissue. This chain is Pectate lyase B (pelB), found in Dickeya chrysanthemi (Pectobacterium chrysanthemi).